We begin with the raw amino-acid sequence, 233 residues long: Mediator of RNA polymerase II transcription subunit 7 (233 aa).

Lys-185 participates in a covalent cross-link: Glycyl lysine isopeptide (Lys-Gly) (interchain with G-Cter in SUMO1); alternate. Residue Lys-185 forms a Glycyl lysine isopeptide (Lys-Gly) (interchain with G-Cter in SUMO2); alternate linkage. Positions 188-213 are disordered; sequence PMDADDSNNCTGQSDQQRENSGHRRD. Position 194 is a phosphoserine (Ser-194). The segment covering 203 to 213 has biased composition (basic and acidic residues); the sequence is QQRENSGHRRD.

It belongs to the Mediator complex subunit 7 family. In terms of assembly, component of the Mediator complex, which is composed of MED1, MED4, MED6, MED7, MED8, MED9, MED10, MED11, MED12, MED13, MED13L, MED14, MED15, MED16, MED17, MED18, MED19, MED20, MED21, MED22, MED23, MED24, MED25, MED26, MED27, MED29, MED30, MED31, CCNC, CDK8 and CDC2L6/CDK11. The MED12, MED13, CCNC and CDK8 subunits form a distinct module termed the CDK8 module. Mediator containing the CDK8 module is less active than Mediator lacking this module in supporting transcriptional activation. Individual preparations of the Mediator complex lacking one or more distinct subunits have been variously termed ARC, CRSP, DRIP, PC2, SMCC and TRAP.

It localises to the nucleus. In terms of biological role, component of the Mediator complex, a coactivator involved in the regulated transcription of nearly all RNA polymerase II-dependent genes. Mediator functions as a bridge to convey information from gene-specific regulatory proteins to the basal RNA polymerase II transcription machinery. Mediator is recruited to promoters by direct interactions with regulatory proteins and serves as a scaffold for the assembly of a functional preinitiation complex with RNA polymerase II and the general transcription factors. The sequence is that of Mediator of RNA polymerase II transcription subunit 7 (MED7) from Sus scrofa (Pig).